A 727-amino-acid chain; its full sequence is MSIFNKVTKSFQWGDKTVVMETGEIARQASGAVLVNIDDTVVLATVVGSKQAKPGQDFFPLTVDYIEKTYAAGKIPGSFFKREAKPSELETLTSRLIDRPIRPLFPEGFYNEVHVVIHTISLNPEVDADIAAMIAVSAALSVSGIPFNGPIGAARVGYVNGEYVLNPGQTARKSSQLDLVVAGTEAAVLMVESEAQQLSEEIMLGAVVFGHEQGKVAINAIHELVRDAGKPVWDWQPPAKDETFIAKVTALAEDKLRAAYQIRSKQARTQALREASASVLESLKGEGVEFDAVKVEALLFDIEAKIVRSQILAGEPRIDGRDTRTVRPIEIRNSVLPRTHGSALFTRGETQALVVSTLGTERDAQRIDALAGEFEDRFIFHYNMPPFATGEVGRMGSTKRREIGHGRLAKRALVACLPSKDEFPYTIRVVSEITESNGSSSMASVCGGCLSLMDAGVPMKAHVAGIAMGLIKEDNRFAVLTDILGDEDHLGDMDFKVAGTTNGITALQMDIKIQGITKEIMQVALAQAKEARMHILGKMQEAMGEAKTEISSFAPKLYTMKINPEKIRDVIGKGGATIRALTDETGCQINIEEDGTITIAATEAAKADEAKRRIEEITAEVEVGKVYEGPVTKILDFGALINLLPGKDGLLHISQIAHERVEKVGDYLQEGQVVKVKVLETDDKGRVKLSMKALADRPAGDSGRPAPAERGERRERRDGGASEQQQQ.

Aspartate 488 and aspartate 494 together coordinate Mg(2+). Residues 555–614 (PKLYTMKINPEKIRDVIGKGGATIRALTDETGCQINIEEDGTITIAATEAAKADEAKRRI) form the KH domain. The S1 motif domain occupies 624–692 (GKVYEGPVTK…DKGRVKLSMK (69 aa)). The disordered stretch occupies residues 691–727 (MKALADRPAGDSGRPAPAERGERRERRDGGASEQQQQ). Residues 707–720 (PAERGERRERRDGG) are compositionally biased toward basic and acidic residues.

Belongs to the polyribonucleotide nucleotidyltransferase family. It depends on Mg(2+) as a cofactor.

Its subcellular location is the cytoplasm. The enzyme catalyses RNA(n+1) + phosphate = RNA(n) + a ribonucleoside 5'-diphosphate. In terms of biological role, involved in mRNA degradation. Catalyzes the phosphorolysis of single-stranded polyribonucleotides processively in the 3'- to 5'-direction. The sequence is that of Polyribonucleotide nucleotidyltransferase from Acidovorax ebreus (strain TPSY) (Diaphorobacter sp. (strain TPSY)).